We begin with the raw amino-acid sequence, 428 residues long: Histidinol dehydrogenase (428 aa).

Tyr-127, Gln-189, and Asn-212 together coordinate NAD(+). Residues Ser-235, Gln-257, and His-260 each coordinate substrate. Zn(2+)-binding residues include Gln-257 and His-260. Residues Glu-325 and His-326 each act as proton acceptor in the active site. Substrate is bound by residues His-326, Asp-359, Glu-413, and His-418. Position 359 (Asp-359) interacts with Zn(2+). Position 418 (His-418) interacts with Zn(2+).

Belongs to the histidinol dehydrogenase family. The cofactor is Zn(2+).

The enzyme catalyses L-histidinol + 2 NAD(+) + H2O = L-histidine + 2 NADH + 3 H(+). Its pathway is amino-acid biosynthesis; L-histidine biosynthesis; L-histidine from 5-phospho-alpha-D-ribose 1-diphosphate: step 9/9. In terms of biological role, catalyzes the sequential NAD-dependent oxidations of L-histidinol to L-histidinaldehyde and then to L-histidine. In Prochlorococcus marinus subsp. pastoris (strain CCMP1986 / NIES-2087 / MED4), this protein is Histidinol dehydrogenase.